Here is a 222-residue protein sequence, read N- to C-terminus: ER membrane protein complex subunit 7 homolog (222 aa).

The signal sequence occupies residues 1-16 (MKSILLLFSLIVLGSA). Topologically, residues 17–145 (TEEVSRTEQT…RKREEWRITD (129 aa)) are extracellular. A helical membrane pass occupies residues 146–166 (MLFSPMVLMLVVPLVVMLILP). Residues 167 to 222 (KMTANDPELKKEMENMQMPKVDMPDVGEMMANFFGGSAPAKKKAVTGGSGSGQRRK) are Cytoplasmic-facing.

The protein belongs to the EMC7 family.

It localises to the membrane. This chain is ER membrane protein complex subunit 7 homolog, found in Caenorhabditis elegans.